The chain runs to 177 residues: Alkyl hydroperoxide reductase AhpD (177 aa).

Catalysis depends on C130, which acts as the Proton donor. Cysteines 130 and 133 form a disulfide. Catalysis depends on C133, which acts as the Cysteine sulfenic acid (-SOH) intermediate.

This sequence belongs to the AhpD family. As to quaternary structure, homotrimer.

The catalysed reaction is N(6)-[(R)-dihydrolipoyl]-L-lysyl-[lipoyl-carrier protein] + a hydroperoxide = N(6)-[(R)-lipoyl]-L-lysyl-[lipoyl-carrier protein] + an alcohol + H2O. Functionally, antioxidant protein with alkyl hydroperoxidase activity. Required for the reduction of the AhpC active site cysteine residues and for the regeneration of the AhpC enzyme activity. The protein is Alkyl hydroperoxide reductase AhpD of Mycolicibacterium smegmatis (strain ATCC 700084 / mc(2)155) (Mycobacterium smegmatis).